The sequence spans 343 residues: tRNA N6-adenosine threonylcarbamoyltransferase (343 aa).

Residues His120 and His124 each contribute to the Fe cation site. Substrate-binding positions include Val142–Gly146, Asp175, Gly188, Asp192, and Asn281. Asp310 is a binding site for Fe cation.

The protein belongs to the KAE1 / TsaD family. Fe(2+) is required as a cofactor.

The protein resides in the cytoplasm. The enzyme catalyses L-threonylcarbamoyladenylate + adenosine(37) in tRNA = N(6)-L-threonylcarbamoyladenosine(37) in tRNA + AMP + H(+). Functionally, required for the formation of a threonylcarbamoyl group on adenosine at position 37 (t(6)A37) in tRNAs that read codons beginning with adenine. Is involved in the transfer of the threonylcarbamoyl moiety of threonylcarbamoyl-AMP (TC-AMP) to the N6 group of A37, together with TsaE and TsaB. TsaD likely plays a direct catalytic role in this reaction. This is tRNA N6-adenosine threonylcarbamoyltransferase from Bacillus anthracis.